The sequence spans 98 residues: Integration host factor subunit alpha (98 aa).

The tract at residues 54 to 74 (LRDKSSRPGRNPKTGESVPVS) is disordered.

The protein belongs to the bacterial histone-like protein family. In terms of assembly, heterodimer of an alpha and a beta chain.

In terms of biological role, this protein is one of the two subunits of integration host factor, a specific DNA-binding protein that functions in genetic recombination as well as in transcriptional and translational control. The chain is Integration host factor subunit alpha (ihfA) from Pasteurella multocida (strain Pm70).